A 239-amino-acid polypeptide reads, in one-letter code: Ribosomal RNA small subunit methyltransferase G (239 aa).

Residues Gly-76, Phe-81, 99-101 (DSS), 128-129 (IE), and Arg-147 each bind S-adenosyl-L-methionine.

It belongs to the methyltransferase superfamily. RNA methyltransferase RsmG family.

The protein localises to the cytoplasm. Specifically methylates the N7 position of a guanine in 16S rRNA. This chain is Ribosomal RNA small subunit methyltransferase G, found in Prochlorococcus marinus (strain MIT 9515).